Here is a 456-residue protein sequence, read N- to C-terminus: Dolichyl-diphosphooligosaccharide--protein glycosyltransferase 48 kDa subunit (456 aa).

Residues 1–42 (MGYFRCARAGSFGRRRKMEPSTAARAWALFWLLLPLLGAVCA) form the signal peptide. Residues 43 to 427 (SGPRTLVLLD…YERFIPSAYP (385 aa)) lie on the Lumenal side of the membrane. The helical transmembrane segment at 428-447 (YYASAFSMMLGLFIFSIVFL) threads the bilayer. At 448–456 (HMKEKEKSD) the chain is on the cytoplasmic side.

The protein belongs to the DDOST 48 kDa subunit family. Component of the oligosaccharyltransferase (OST) complex. OST exists in two different complex forms which contain common core subunits RPN1, RPN2, OST48, OST4, DAD1 and TMEM258, either STT3A or STT3B as catalytic subunits, and form-specific accessory subunits. STT3A complex assembly occurs through the formation of 3 subcomplexes. Subcomplex 1 contains RPN1 and TMEM258, subcomplex 2 contains the STT3A-specific subunits STT3A, DC2/OSTC, and KCP2 as well as the core subunit OST4, and subcomplex 3 contains RPN2, DAD1, and OST48. The STT3A complex can form stable complexes with the Sec61 complex or with both the Sec61 and TRAP complexes. Interacts with SMIM22.

The protein resides in the endoplasmic reticulum membrane. It functions in the pathway protein modification; protein glycosylation. Subunit of the oligosaccharyl transferase (OST) complex that catalyzes the initial transfer of a defined glycan (Glc(3)Man(9)GlcNAc(2) in eukaryotes) from the lipid carrier dolichol-pyrophosphate to an asparagine residue within an Asn-X-Ser/Thr consensus motif in nascent polypeptide chains, the first step in protein N-glycosylation. N-glycosylation occurs cotranslationally and the complex associates with the Sec61 complex at the channel-forming translocon complex that mediates protein translocation across the endoplasmic reticulum (ER). All subunits are required for a maximal enzyme activity. Required for the assembly of both SST3A- and SS3B-containing OST complexes. The polypeptide is Dolichyl-diphosphooligosaccharide--protein glycosyltransferase 48 kDa subunit (Homo sapiens (Human)).